A 904-amino-acid chain; its full sequence is Putative pentatricopeptide repeat-containing protein At1g19290 (904 aa).

19 PPR repeats span residues 154–188 (SPTV…GRIP), 189–223 (SLLS…EVSP), 224–254 (DVFT…TESS), 260–294 (NVVT…GVSR), 295–329 (NVVT…KLVA), 330–364 (DQHM…GVRT), 365–399 (NTTI…SLKP), 400–434 (DHHT…EVVP), 435–469 (TVMT…GVNA), 470–504 (DEIS…GLLT), 505–539 (DTIT…RCKP), 540–574 (AVQT…GIFP), 575–609 (TIEM…GLTP), 610–644 (TVAT…GITL), 645–679 (NVNI…DLLL), 718–753 (NNIV…RFIP), 754–788 (DEYT…GIIP), 789–823 (NIVT…GITP), and 824–858 (NAIT…GLVR).

This sequence belongs to the PPR family. P subfamily.

In Arabidopsis thaliana (Mouse-ear cress), this protein is Putative pentatricopeptide repeat-containing protein At1g19290.